Consider the following 400-residue polypeptide: Phosphoglycerate kinase (400 aa).

Substrate-binding positions include 21–23 (DFN), R36, 59–62 (HCSR), R118, and R151. ATP contacts are provided by residues K201, E323, and 353–356 (GGDT).

Belongs to the phosphoglycerate kinase family. As to quaternary structure, monomer.

It is found in the cytoplasm. The enzyme catalyses (2R)-3-phosphoglycerate + ATP = (2R)-3-phospho-glyceroyl phosphate + ADP. It functions in the pathway carbohydrate degradation; glycolysis; pyruvate from D-glyceraldehyde 3-phosphate: step 2/5. The chain is Phosphoglycerate kinase from Bartonella bacilliformis (strain ATCC 35685 / KC583 / Herrer 020/F12,63).